The sequence spans 705 residues: Ribosomal RNA large subunit methyltransferase K/L (705 aa).

A THUMP domain is found at 42–154; sequence LAQKVCLSTR…RYGVSMYIDY (113 aa).

The protein belongs to the methyltransferase superfamily. RlmKL family.

Its subcellular location is the cytoplasm. It carries out the reaction guanosine(2445) in 23S rRNA + S-adenosyl-L-methionine = N(2)-methylguanosine(2445) in 23S rRNA + S-adenosyl-L-homocysteine + H(+). The catalysed reaction is guanosine(2069) in 23S rRNA + S-adenosyl-L-methionine = N(2)-methylguanosine(2069) in 23S rRNA + S-adenosyl-L-homocysteine + H(+). Its function is as follows. Specifically methylates the guanine in position 2445 (m2G2445) and the guanine in position 2069 (m7G2069) of 23S rRNA. The sequence is that of Ribosomal RNA large subunit methyltransferase K/L from Pseudoalteromonas translucida (strain TAC 125).